The sequence spans 740 residues: Catalase-peroxidase (740 aa).

Basic and acidic residues predominate over residues 1 to 16 (MSENHDAIVTDAKTEE). The interval 1–38 (MSENHDAIVTDAKTEETDGCPVAHGRAPHPTQGGGNRQ) is disordered. A cross-link (tryptophyl-tyrosyl-methioninium (Trp-Tyr) (with M-257)) is located at residues 108–231 (WHSAGTYRIS…LGAVQMGLIY (124 aa)). H109 serves as the catalytic Proton acceptor. Positions 231–257 (YVNPEGPNGNPDPIAAARDIRETFRRM) form a cross-link, tryptophyl-tyrosyl-methioninium (Tyr-Met) (with W-108). H272 provides a ligand contact to heme b.

It belongs to the peroxidase family. Peroxidase/catalase subfamily. In terms of assembly, homodimer. The cofactor is heme b. Post-translationally, formation of the three residue Trp-Tyr-Met cross-link is important for the catalase, but not the peroxidase activity of the enzyme.

The enzyme catalyses H2O2 + AH2 = A + 2 H2O. It carries out the reaction 2 H2O2 = O2 + 2 H2O. Its function is as follows. Bifunctional enzyme with both catalase and broad-spectrum peroxidase activity. The polypeptide is Catalase-peroxidase (Streptomyces coelicolor (strain ATCC BAA-471 / A3(2) / M145)).